A 126-amino-acid chain; its full sequence is Cyclin-dependent kinase 2-associated protein 2 (126 aa).

Positions 1 to 48 are disordered; sequence MSYKPIAPAPSSTPGSSTPGPGTPVPTGSVPSPSGSVPGAGAPFRPLF. Residues 9-43 are compositionally biased toward low complexity; that stretch reads APSSTPGSSTPGPGTPVPTGSVPSPSGSVPGAGAP. The interval 64–106 is interaction with CDK2; sequence PPGAQGSQSTYTDLLSVIEEMGKEIRPTYAGSKSAMERLKRGI.

It belongs to the CDK2AP family. In terms of assembly, component of the nucleosome remodeling and deacetylase (NuRD) repressor complex, composed of core proteins MTA1, MTA2, MTA3, RBBP4, RBBP7, HDAC1, HDAC2, MBD2, MBD3, and peripherally associated proteins CDK2AP1, CDK2AP2, GATAD2A, GATAD2B, CHD3, CHD4 and CHD5. The exact stoichiometry of the NuRD complex is unknown, and some subunits such as MBD2 and MBD3, GATAD2A and GATAD2B, and CHD3, CHD4 and CHD5 define mutually exclusive NuRD complexes. Interacts with CDK2AP1. Interacts with CDK2. Interacts with MAPK1. In terms of processing, phosphorylated by MAPK1 and CDK2. Ubiquitous.

The protein localises to the cytoplasm. The protein resides in the nucleus. Functionally, acts as a component of the histone deacetylase NuRD complex which participates in the remodeling of chromatin. Inhibits cell cycle G1/S phase transition by repressing CDK2 expression and activation; represses CDK2 activation by inhibiting its interaction with cyclin E and A. Plays a role in regulating the self-renewal of embryonic stem cells (ESCs) and in maintaining cell survival during terminal differentiation of ESCs. Regulates microtubule organization of metaphase II oocytes. This chain is Cyclin-dependent kinase 2-associated protein 2 (CDK2AP2), found in Homo sapiens (Human).